We begin with the raw amino-acid sequence, 737 residues long: MAKQVFQTTFAGRELIVETGQVAKQANGSVVVRYGESTVLTAAVMSKKMATGDFFPLQVNYEEKMYAAGKFPGGFMKREGRPSTDATLTARLIDRPIRPMFAEGFRNEVQVINTVLSYDENASAPMAAMFGSSLALSISDIPFDGPIAGVQVGYVDGQIIINPSQEQAEQSLLELTVAGTKHAINMVESGAKELSEEIMLEALLKGHEAVKELIAFQEEIVAAVGKEKAEVELLHVDAELQAEIIAAYNSDLQKAVQVEEKLAREAATQVVKDQVTAVYEEKYADHEEFDRIMRDVAEILEQMEHAEVRRLITEDKVRPDGRKVDEIRPLDAVVDFLPRVHGSGLFTRGQTQALSVLTLAPMGETQIIDGLDPEYKKRFMHHYNFPQYSVGETGRYGAPGRREIGHGALGERALAQVLPSLEEFPYAIRLVAEVLESNGSSSQASICAGTLALMAGGVPIKAPVAGIAMGLISDGNNYTVLTDIQGLEDHFGDMDFKVAGTRDGITALQMDIKIQGITAEILTEALAQAKKARFEILDVIEATIPEVRLELAPTAPKIDTIKIDVDKIKIVIGKGGETIDKIIAETGVKIDIDEEGNVSIYSSDQDAINRAKEIIAGLVREAKVDEVYRAKVVRIEKFGAFVNLFDKTDALVHISEMAWTRTNRVEDLVEIGDEVDVKVIKIDEKGRIDASMKALLPRPPKPEHDEKGEKSERPHRPRHHKDHKPKKEFTETPKDSE.

Mg(2+) contacts are provided by D489 and D495. The KH domain maps to 556–615 (PKIDTIKIDVDKIKIVIGKGGETIDKIIAETGVKIDIDEEGNVSIYSSDQDAINRAKEII). One can recognise an S1 motif domain in the interval 625–693 (DEVYRAKVVR…EKGRIDASMK (69 aa)). Positions 691–737 (SMKALLPRPPKPEHDEKGEKSERPHRPRHHKDHKPKKEFTETPKDSE) are disordered. A compositionally biased stretch (basic and acidic residues) spans 700 to 714 (PKPEHDEKGEKSERP). Over residues 715-724 (HRPRHHKDHK) the composition is skewed to basic residues. A compositionally biased stretch (basic and acidic residues) spans 725–737 (PKKEFTETPKDSE).

The protein belongs to the polyribonucleotide nucleotidyltransferase family. The cofactor is Mg(2+).

It is found in the cytoplasm. The catalysed reaction is RNA(n+1) + phosphate = RNA(n) + a ribonucleoside 5'-diphosphate. Involved in mRNA degradation. Catalyzes the phosphorolysis of single-stranded polyribonucleotides processively in the 3'- to 5'-direction. The polypeptide is Polyribonucleotide nucleotidyltransferase (Streptococcus pneumoniae serotype 19F (strain G54)).